Consider the following 142-residue polypeptide: Large ribosomal subunit protein uL13 (142 aa).

The protein belongs to the universal ribosomal protein uL13 family. Part of the 50S ribosomal subunit.

This protein is one of the early assembly proteins of the 50S ribosomal subunit, although it is not seen to bind rRNA by itself. It is important during the early stages of 50S assembly. The chain is Large ribosomal subunit protein uL13 from Thioalkalivibrio sulfidiphilus (strain HL-EbGR7).